The chain runs to 135 residues: UPF0355 protein SE_2351 (135 aa).

The protein belongs to the UPF0355 family.

This is UPF0355 protein SE_2351 from Staphylococcus epidermidis (strain ATCC 12228 / FDA PCI 1200).